A 500-amino-acid chain; its full sequence is NAD(P)H-quinone oxidoreductase chain 4, chloroplastic (500 aa).

The next 14 membrane-spanning stretches (helical) occupy residues 4–24, 35–55, 87–107, 111–131, 134–154, 167–187, 211–231, 242–262, 274–294, 313–333, 334–354, 386–406, 417–437, and 462–482; these read FPWLTILVVLPIFAGSLIFFL, YTIAICLLEFLIMTYAFCYHF, LGSILLTGFITTLATLAAWPV, SQLFYFLMLAMYSGQIGLFSS, LLLFFIMWELELIPVYLLLSM, FILYTAGGSIFFLIGVLGMGL, ILLYFGFLIAYAVKLPIIPLH, HYSTCMLLAGILLKMGAYGLI, YLFSPWLVIIGAVQIIYAALT, MGFIIIGIGSITNIGLNGAIL, QILSHGFIGATLFFLAGTACD, LALPGMSGFVAELVVFFGLIT, LITFVMAIGMILTPIYLLSML, and LFLLICIFLPVIGIGIYPDFV.

The protein belongs to the complex I subunit 4 family.

It localises to the plastid. The protein resides in the chloroplast thylakoid membrane. It catalyses the reaction a plastoquinone + NADH + (n+1) H(+)(in) = a plastoquinol + NAD(+) + n H(+)(out). The catalysed reaction is a plastoquinone + NADPH + (n+1) H(+)(in) = a plastoquinol + NADP(+) + n H(+)(out). The polypeptide is NAD(P)H-quinone oxidoreductase chain 4, chloroplastic (Saccharum hybrid (Sugarcane)).